The chain runs to 292 residues: L-serine dehydratase, alpha chain (292 aa).

The protein belongs to the iron-sulfur dependent L-serine dehydratase family. In terms of assembly, heterooctamer of four alpha chains and four beta chains. Requires [4Fe-4S] cluster as cofactor.

It carries out the reaction L-serine = pyruvate + NH4(+). Its pathway is carbohydrate biosynthesis; gluconeogenesis. This is L-serine dehydratase, alpha chain (sdhA) from Peptoniphilus asaccharolyticus (Peptostreptococcus asaccharolyticus).